We begin with the raw amino-acid sequence, 439 residues long: Methionine aminopeptidase 2-2 (439 aa).

Residues 1–90 (MAAQAPPTDE…SQLFPDKQYP (90 aa)) form a disordered region. A compositionally biased stretch (basic and acidic residues) spans 10–23 (ELSKLSVEDADNKP). Over residues 35–45 (DEDDSEDDAED) the composition is skewed to acidic residues. Basic residues predominate over residues 54–68 (AKKKKKRKPRKKKKN). Position 192 (His192) interacts with substrate. A divalent metal cation contacts are provided by Asp212, Asp223, and His292. His300 contributes to the substrate binding site. A divalent metal cation is bound by residues Glu325 and Glu420.

It belongs to the peptidase M24A family. Methionine aminopeptidase eukaryotic type 2 subfamily. Co(2+) is required as a cofactor. Zn(2+) serves as cofactor. It depends on Mn(2+) as a cofactor. Requires Fe(2+) as cofactor.

The protein localises to the cytoplasm. The enzyme catalyses Release of N-terminal amino acids, preferentially methionine, from peptides and arylamides.. Cotranslationally removes the N-terminal methionine from nascent proteins. The N-terminal methionine is often cleaved when the second residue in the primary sequence is small and uncharged (Met-Ala-, Cys, Gly, Pro, Ser, Thr, or Val). This is Methionine aminopeptidase 2-2 from Chaetomium globosum (strain ATCC 6205 / CBS 148.51 / DSM 1962 / NBRC 6347 / NRRL 1970) (Soil fungus).